Here is a 224-residue protein sequence, read N- to C-terminus: Golgi to ER traffic protein 1 (224 aa).

At Met-1–Leu-33 the chain is on the lumenal side. The chain crosses the membrane as a helical span at residues Leu-34 to Pro-53. Topologically, residues Ala-54 to Ile-137 are cytoplasmic. Residues Ala-102–Ala-124 are a coiled coil. The helical transmembrane segment at Phe-138–Phe-158 threads the bilayer. Topologically, residues Trp-159–Ser-182 are lumenal. A helical membrane pass occupies residues Val-183–Ile-199. The Cytoplasmic portion of the chain corresponds to Val-200–Ala-224.

It belongs to the WRB/GET1 family. Component of the Golgi to ER traffic (GET) complex, which is composed of GET1, GET2 and GET3. Within the complex, GET1 and GET2 form a heterotetramer which is stabilized by phosphatidylinositol binding and which binds to the GET3 homodimer.

The protein resides in the endoplasmic reticulum membrane. Its subcellular location is the golgi apparatus membrane. Functionally, required for the post-translational delivery of tail-anchored (TA) proteins to the endoplasmic reticulum. Together with GET2, acts as a membrane receptor for soluble GET3, which recognizes and selectively binds the transmembrane domain of TA proteins in the cytosol. The GET complex cooperates with the HDEL receptor ERD2 to mediate the ATP-dependent retrieval of resident ER proteins that contain a C-terminal H-D-E-L retention signal from the Golgi to the ER. This chain is Golgi to ER traffic protein 1, found in Yarrowia lipolytica (strain CLIB 122 / E 150) (Yeast).